The following is a 157-amino-acid chain: SsrA-binding protein (157 aa).

Basic and acidic residues predominate over residues 135–151 (DKRETEKKRDWSREKGR). The segment at 135–157 (DKRETEKKRDWSREKGRLLRARG) is disordered.

This sequence belongs to the SmpB family.

The protein localises to the cytoplasm. Functionally, required for rescue of stalled ribosomes mediated by trans-translation. Binds to transfer-messenger RNA (tmRNA), required for stable association of tmRNA with ribosomes. tmRNA and SmpB together mimic tRNA shape, replacing the anticodon stem-loop with SmpB. tmRNA is encoded by the ssrA gene; the 2 termini fold to resemble tRNA(Ala) and it encodes a 'tag peptide', a short internal open reading frame. During trans-translation Ala-aminoacylated tmRNA acts like a tRNA, entering the A-site of stalled ribosomes, displacing the stalled mRNA. The ribosome then switches to translate the ORF on the tmRNA; the nascent peptide is terminated with the 'tag peptide' encoded by the tmRNA and targeted for degradation. The ribosome is freed to recommence translation, which seems to be the essential function of trans-translation. In Rhodopseudomonas palustris (strain BisB5), this protein is SsrA-binding protein.